The chain runs to 204 residues: Superoxide dismutase [Mn] (204 aa).

H27 contacts Mn(2+). Residues T34 and T70 each carry the phosphothreonine modification. Positions 82, 164, and 168 each coordinate Mn(2+).

This sequence belongs to the iron/manganese superoxide dismutase family. Homodimer. The cofactor is Mn(2+).

It catalyses the reaction 2 superoxide + 2 H(+) = H2O2 + O2. Functionally, destroys superoxide anion radicals which are normally produced within the cells and which are toxic to biological systems. This chain is Superoxide dismutase [Mn] (sodA), found in Bacillus caldotenax.